Here is a 427-residue protein sequence, read N- to C-terminus: Serine--tRNA ligase (427 aa).

231-233 (TAE) is a binding site for L-serine. 262–264 (RSE) is a binding site for ATP. Glu285 serves as a coordination point for L-serine. 349-352 (EISS) lines the ATP pocket. An L-serine-binding site is contributed by Ser385.

The protein belongs to the class-II aminoacyl-tRNA synthetase family. Type-1 seryl-tRNA synthetase subfamily. As to quaternary structure, homodimer. The tRNA molecule binds across the dimer.

The protein localises to the cytoplasm. It carries out the reaction tRNA(Ser) + L-serine + ATP = L-seryl-tRNA(Ser) + AMP + diphosphate + H(+). It catalyses the reaction tRNA(Sec) + L-serine + ATP = L-seryl-tRNA(Sec) + AMP + diphosphate + H(+). The protein operates within aminoacyl-tRNA biosynthesis; selenocysteinyl-tRNA(Sec) biosynthesis; L-seryl-tRNA(Sec) from L-serine and tRNA(Sec): step 1/1. Catalyzes the attachment of serine to tRNA(Ser). Is also able to aminoacylate tRNA(Sec) with serine, to form the misacylated tRNA L-seryl-tRNA(Sec), which will be further converted into selenocysteinyl-tRNA(Sec). This Brucella canis (strain ATCC 23365 / NCTC 10854 / RM-666) protein is Serine--tRNA ligase.